Reading from the N-terminus, the 197-residue chain is Guanylate kinase (197 aa).

The region spanning 7 to 185 (GLIIILSSPS…TLKKIHEIIV (179 aa)) is the Guanylate kinase-like domain. 14-21 (SPSGTGKS) lines the ATP pocket.

This sequence belongs to the guanylate kinase family.

Its subcellular location is the cytoplasm. It carries out the reaction GMP + ATP = GDP + ADP. In terms of biological role, essential for recycling GMP and indirectly, cGMP. This Rickettsia typhi (strain ATCC VR-144 / Wilmington) protein is Guanylate kinase.